A 168-amino-acid polypeptide reads, in one-letter code: tRNA-splicing endonuclease (168 aa).

Catalysis depends on residues Tyr107, His114, and Lys145.

Belongs to the tRNA-intron endonuclease family. Archaeal short subfamily. As to quaternary structure, homotetramer; although the tetramer contains four active sites, only two participate in the cleavage. Therefore, it should be considered as a dimer of dimers.

The catalysed reaction is pretRNA = a 3'-half-tRNA molecule with a 5'-OH end + a 5'-half-tRNA molecule with a 2',3'-cyclic phosphate end + an intron with a 2',3'-cyclic phosphate and a 5'-hydroxyl terminus.. Endonuclease that removes tRNA introns. Cleaves pre-tRNA at the 5'- and 3'-splice sites to release the intron. The products are an intron and two tRNA half-molecules bearing 2',3' cyclic phosphate and 5'-OH termini. Recognizes a pseudosymmetric substrate in which 2 bulged loops of 3 bases are separated by a stem of 4 bp. The chain is tRNA-splicing endonuclease from Thermococcus kodakarensis (strain ATCC BAA-918 / JCM 12380 / KOD1) (Pyrococcus kodakaraensis (strain KOD1)).